The primary structure comprises 107 residues: Phosphoribosyl-ATP pyrophosphatase (107 aa).

The protein belongs to the PRA-PH family.

The protein localises to the cytoplasm. The catalysed reaction is 1-(5-phospho-beta-D-ribosyl)-ATP + H2O = 1-(5-phospho-beta-D-ribosyl)-5'-AMP + diphosphate + H(+). The protein operates within amino-acid biosynthesis; L-histidine biosynthesis; L-histidine from 5-phospho-alpha-D-ribose 1-diphosphate: step 2/9. The protein is Phosphoribosyl-ATP pyrophosphatase of Sinorhizobium medicae (strain WSM419) (Ensifer medicae).